Here is a 167-residue protein sequence, read N- to C-terminus: NADH-quinone oxidoreductase subunit B (167 aa).

[4Fe-4S] cluster-binding residues include C40, C41, C105, and C134.

Belongs to the complex I 20 kDa subunit family. As to quaternary structure, NDH-1 is composed of 14 different subunits. Subunits NuoB, C, D, E, F, and G constitute the peripheral sector of the complex. [4Fe-4S] cluster serves as cofactor.

The protein resides in the cell inner membrane. It carries out the reaction a quinone + NADH + 5 H(+)(in) = a quinol + NAD(+) + 4 H(+)(out). In terms of biological role, NDH-1 shuttles electrons from NADH, via FMN and iron-sulfur (Fe-S) centers, to quinones in the respiratory chain. The immediate electron acceptor for the enzyme in this species is believed to be ubiquinone. Couples the redox reaction to proton translocation (for every two electrons transferred, four hydrogen ions are translocated across the cytoplasmic membrane), and thus conserves the redox energy in a proton gradient. The polypeptide is NADH-quinone oxidoreductase subunit B (Campylobacter jejuni subsp. jejuni serotype O:2 (strain ATCC 700819 / NCTC 11168)).